Here is a 2299-residue protein sequence, read N- to C-terminus: Protein Ycf2 (2299 aa).

1642–1649 is a binding site for ATP; it reads GSIGTGRS.

It belongs to the Ycf2 family.

It localises to the plastid. The protein localises to the chloroplast stroma. Its function is as follows. Probable ATPase of unknown function. Its presence in a non-photosynthetic plant (Epifagus virginiana) and experiments in tobacco indicate that it has an essential function which is probably not related to photosynthesis. The sequence is that of Protein Ycf2 from Nandina domestica (Heavenly bamboo).